The chain runs to 154 residues: 6,7-dimethyl-8-ribityllumazine synthase (154 aa).

5-amino-6-(D-ribitylamino)uracil is bound by residues F26, A60–E62, and C84–I86. E89 to T90 serves as a coordination point for (2S)-2-hydroxy-3-oxobutyl phosphate. H92 (proton donor) is an active-site residue. Position 117 (N117) interacts with 5-amino-6-(D-ribitylamino)uracil. (2S)-2-hydroxy-3-oxobutyl phosphate is bound at residue R131.

It belongs to the DMRL synthase family.

The catalysed reaction is (2S)-2-hydroxy-3-oxobutyl phosphate + 5-amino-6-(D-ribitylamino)uracil = 6,7-dimethyl-8-(1-D-ribityl)lumazine + phosphate + 2 H2O + H(+). It functions in the pathway cofactor biosynthesis; riboflavin biosynthesis; riboflavin from 2-hydroxy-3-oxobutyl phosphate and 5-amino-6-(D-ribitylamino)uracil: step 1/2. Functionally, catalyzes the formation of 6,7-dimethyl-8-ribityllumazine by condensation of 5-amino-6-(D-ribitylamino)uracil with 3,4-dihydroxy-2-butanone 4-phosphate. This is the penultimate step in the biosynthesis of riboflavin. In Acidovorax sp. (strain JS42), this protein is 6,7-dimethyl-8-ribityllumazine synthase.